Consider the following 162-residue polypeptide: MTRKQRRLTMIGGSLVVLAIAAALVLNALRDSIVFFSTPVMVSEHHIQPGQRFRLGGLVQNGSLVRGDNLVVTFKVSDGSATLPVTYKGILPDLFREGQGVVAEGALDSSGVFRADTVLAKHDETYMPKEVADALKKQGHWKDDYGPQAGAVEASGKQGVSQ.

Residues 1–7 (MTRKQRR) are Cytoplasmic-facing. Residues 8 to 28 (LTMIGGSLVVLAIAAALVLNA) form a helical; Signal-anchor for type II membrane protein membrane-spanning segment. The Periplasmic segment spans residues 29–162 (LRDSIVFFST…EASGKQGVSQ (134 aa)). Residues His122 and Tyr126 each coordinate heme. The tract at residues 138–162 (QGHWKDDYGPQAGAVEASGKQGVSQ) is disordered.

Belongs to the CcmE/CycJ family.

It localises to the cell inner membrane. Heme chaperone required for the biogenesis of c-type cytochromes. Transiently binds heme delivered by CcmC and transfers the heme to apo-cytochromes in a process facilitated by CcmF and CcmH. The polypeptide is Cytochrome c-type biogenesis protein CcmE (Nitrobacter hamburgensis (strain DSM 10229 / NCIMB 13809 / X14)).